The chain runs to 710 residues: Elongation factor G (710 aa).

Positions 8-297 (ERVRNIGIAA…AVVDYLPSPI (290 aa)) constitute a tr-type G domain. GTP is bound by residues 17 to 24 (AHIDAGKT), 96 to 100 (DTPGH), and 150 to 153 (NKMD).

Belongs to the TRAFAC class translation factor GTPase superfamily. Classic translation factor GTPase family. EF-G/EF-2 subfamily.

The protein resides in the cytoplasm. Its function is as follows. Catalyzes the GTP-dependent ribosomal translocation step during translation elongation. During this step, the ribosome changes from the pre-translocational (PRE) to the post-translocational (POST) state as the newly formed A-site-bound peptidyl-tRNA and P-site-bound deacylated tRNA move to the P and E sites, respectively. Catalyzes the coordinated movement of the two tRNA molecules, the mRNA and conformational changes in the ribosome. The chain is Elongation factor G from Synechococcus sp. (strain JA-3-3Ab) (Cyanobacteria bacterium Yellowstone A-Prime).